Consider the following 470-residue polypeptide: Glutamate--tRNA ligase (470 aa).

A 'HIGH' region motif is present at residues 9-19 (PSPTGYLHVGG). A 'KMSKS' region motif is present at residues 236 to 240 (RLSKR). Residue lysine 239 coordinates ATP.

This sequence belongs to the class-I aminoacyl-tRNA synthetase family. Glutamate--tRNA ligase type 1 subfamily. In terms of assembly, monomer.

It is found in the cytoplasm. It carries out the reaction tRNA(Glu) + L-glutamate + ATP = L-glutamyl-tRNA(Glu) + AMP + diphosphate. Catalyzes the attachment of glutamate to tRNA(Glu) in a two-step reaction: glutamate is first activated by ATP to form Glu-AMP and then transferred to the acceptor end of tRNA(Glu). This chain is Glutamate--tRNA ligase, found in Colwellia psychrerythraea (strain 34H / ATCC BAA-681) (Vibrio psychroerythus).